Reading from the N-terminus, the 377-residue chain is MTQIQQAGADSQALRTPADYQAQLDEKRERLTQLFAGFNPPALEVHASPAEHYRMRAEFRIWHEGDDLFHCMYAQATKEIIRVDHFPTASLLINQLMPVLLAGLRPHFVLRRKLFQIDYLSTQSGQIIVSLLYHRKLEAEWQQAAETLQADLQAQGFDLRLIGRAHKQKICLGDDFVIEQLNVAGRQLTYKQVENSFTQPNAAINEQMLGWALDVTRGSEGDLLELYCGNGNFSIALAQNFRKVLATEIAKPSVDSAQFNIAANGVDNLIILRMSAEEFTMAMRGEREFNRLKGVDLKSYQCNTIFVDPPRAGLDDATVKLVQEYDNILYISCNPETLQANMAVLGETHEVARFALFDQFPWTHHMEAGVYLKRKAG.

S-adenosyl-L-methionine-binding residues include Gln199, Tyr227, Asn232, Glu248, and Asp308. Catalysis depends on Cys333, which acts as the Nucleophile. Residue Glu367 is the Proton acceptor of the active site.

Belongs to the class I-like SAM-binding methyltransferase superfamily. RNA M5U methyltransferase family. TrmA subfamily.

It catalyses the reaction uridine(54) in tRNA + S-adenosyl-L-methionine = 5-methyluridine(54) in tRNA + S-adenosyl-L-homocysteine + H(+). The catalysed reaction is uridine(341) in tmRNA + S-adenosyl-L-methionine = 5-methyluridine(341) in tmRNA + S-adenosyl-L-homocysteine + H(+). Functionally, dual-specificity methyltransferase that catalyzes the formation of 5-methyluridine at position 54 (m5U54) in all tRNAs, and that of position 341 (m5U341) in tmRNA (transfer-mRNA). The sequence is that of tRNA/tmRNA (uracil-C(5))-methyltransferase from Aeromonas salmonicida (strain A449).